A 189-amino-acid polypeptide reads, in one-letter code: MRPTNKRILDAAMQLLVKKGYRATTTKEIAEKANVSEATIFRNFKNKQGLVEALLSQHSSNRGSILEQTEGDLYKDLLHIGTCLLEELEHRKDIIKISFREPAMFQDVINHVTEYPQSMKQLLVDYLKTMGEKGVIQTGNEAEHADVFMSIIFGYFIHRLHLGDRVISMPQEKMLEHSTALFVKGISAD.

Residues 2 to 62 (RPTNKRILDA…ALLSQHSSNR (61 aa)) enclose the HTH tetR-type domain. Positions 25–44 (TTKEIAEKANVSEATIFRNF) form a DNA-binding region, H-T-H motif.

This is an uncharacterized protein from Bacillus subtilis (strain 168).